The primary structure comprises 344 residues: tRNA N6-adenosine threonylcarbamoyltransferase (344 aa).

Residues His119 and His123 each contribute to the Fe cation site. Substrate contacts are provided by residues 141 to 145 (VVSGG), Asp174, Gly187, Asp191, and Asn280. Position 310 (Asp310) interacts with Fe cation.

This sequence belongs to the KAE1 / TsaD family. Fe(2+) is required as a cofactor.

Its subcellular location is the cytoplasm. It carries out the reaction L-threonylcarbamoyladenylate + adenosine(37) in tRNA = N(6)-L-threonylcarbamoyladenosine(37) in tRNA + AMP + H(+). Its function is as follows. Required for the formation of a threonylcarbamoyl group on adenosine at position 37 (t(6)A37) in tRNAs that read codons beginning with adenine. Is involved in the transfer of the threonylcarbamoyl moiety of threonylcarbamoyl-AMP (TC-AMP) to the N6 group of A37, together with TsaE and TsaB. TsaD likely plays a direct catalytic role in this reaction. The protein is tRNA N6-adenosine threonylcarbamoyltransferase of Listeria monocytogenes serotype 4b (strain CLIP80459).